The sequence spans 61 residues: Small ribosomal subunit protein uS14 (61 aa).

C24, C27, C40, and C43 together coordinate Zn(2+).

It belongs to the universal ribosomal protein uS14 family. Zinc-binding uS14 subfamily. As to quaternary structure, part of the 30S ribosomal subunit. Contacts proteins S3 and S10. The cofactor is Zn(2+).

Its function is as follows. Binds 16S rRNA, required for the assembly of 30S particles and may also be responsible for determining the conformation of the 16S rRNA at the A site. In Thermotoga maritima (strain ATCC 43589 / DSM 3109 / JCM 10099 / NBRC 100826 / MSB8), this protein is Small ribosomal subunit protein uS14.